Reading from the N-terminus, the 205-residue chain is MEFLWAPLLGLCCSLAAADRHTVFWNSSNPKFRNEDYTIHVQLNDYVDIICPHYEDHSVADAAMEQYILYLVEHEEYQLCQPQSKDQVRWQCNRPSAKHGPEKLSEKFQRFTPFTLGKEFKEGHSYYYISKPIHQHEDRCLRLKVTVSGKITHSPQAHDNPQEKRLAADDPEVRVLHSIGHSAAPRLFPLAWTVLLLPLLLLQTP.

Positions 1-18 are cleaved as a signal peptide; sequence MEFLWAPLLGLCCSLAAA. Residues 19 to 151 enclose the Ephrin RBD domain; it reads DRHTVFWNSS…RLKVTVSGKI (133 aa). Asn-26 is a glycosylation site (N-linked (GlcNAc...) asparagine). 2 disulfide bridges follow: Cys-51-Cys-92 and Cys-80-Cys-140. Ser-182 is lipidated: GPI-anchor amidated serine. The propeptide at 183 to 205 is removed in mature form; the sequence is AAPRLFPLAWTVLLLPLLLLQTP.

Belongs to the ephrin family. Monomer. Homodimer. Forms heterodimers with EPHA2. Binds to the receptor tyrosine kinases EPHA2, EPHA3, EPHA4, EPHA5, EPHA6 and EPHA7. Also binds with low affinity to EPHA1. In terms of processing, undergoes proteolysis by a metalloprotease to give rise to a soluble monomeric form. N-Glycosylation is required for binding to EPHA2 receptor and inducing its internalization. In terms of tissue distribution, brain. Down-regulated in primary glioma tissues compared to the normal tissues. The soluble monomeric form is expressed in the glioblastoma multiforme (GBM) and breast cancer cells (at protein level).

Its subcellular location is the cell membrane. The protein resides in the secreted. Its function is as follows. Cell surface GPI-bound ligand for Eph receptors, a family of receptor tyrosine kinases which are crucial for migration, repulsion and adhesion during neuronal, vascular and epithelial development. Binds promiscuously Eph receptors residing on adjacent cells, leading to contact-dependent bidirectional signaling into neighboring cells. Plays an important role in angiogenesis and tumor neovascularization. The recruitment of VAV2, VAV3 and PI3-kinase p85 subunit by phosphorylated EPHA2 is critical for EFNA1-induced RAC1 GTPase activation and vascular endothelial cell migration and assembly. Exerts anti-oncogenic effects in tumor cells through activation and down-regulation of EPHA2. Activates EPHA2 by inducing tyrosine phosphorylation which leads to its internalization and degradation. Acts as a negative regulator in the tumorigenesis of gliomas by down-regulating EPHA2 and FAK. Can evoke collapse of embryonic neuronal growth cone and regulates dendritic spine morphogenesis. The sequence is that of Ephrin-A1 (EFNA1) from Homo sapiens (Human).